The chain runs to 121 residues: Large ribosomal subunit protein bL12 (121 aa).

The protein belongs to the bacterial ribosomal protein bL12 family. As to quaternary structure, homodimer. Part of the ribosomal stalk of the 50S ribosomal subunit. Forms a multimeric L10(L12)X complex, where L10 forms an elongated spine to which 2 to 4 L12 dimers bind in a sequential fashion. Binds GTP-bound translation factors.

Functionally, forms part of the ribosomal stalk which helps the ribosome interact with GTP-bound translation factors. Is thus essential for accurate translation. The polypeptide is Large ribosomal subunit protein bL12 (Xanthomonas axonopodis pv. citri (strain 306)).